Here is a 398-residue protein sequence, read N- to C-terminus: Succinate--CoA ligase [ADP-forming] subunit beta (398 aa).

Residues 9–254 (KALLKSYGAP…TTEEDDKEIE (246 aa)) form the ATP-grasp domain. Residues K46, 53 to 55 (GRG), E109, A112, and E117 contribute to the ATP site. N209 and D223 together coordinate Mg(2+). Substrate-binding positions include N274 and 331 to 333 (GIM).

Belongs to the succinate/malate CoA ligase beta subunit family. As to quaternary structure, heterotetramer of two alpha and two beta subunits. Mg(2+) is required as a cofactor.

It catalyses the reaction succinate + ATP + CoA = succinyl-CoA + ADP + phosphate. It carries out the reaction GTP + succinate + CoA = succinyl-CoA + GDP + phosphate. The protein operates within carbohydrate metabolism; tricarboxylic acid cycle; succinate from succinyl-CoA (ligase route): step 1/1. Its function is as follows. Succinyl-CoA synthetase functions in the citric acid cycle (TCA), coupling the hydrolysis of succinyl-CoA to the synthesis of either ATP or GTP and thus represents the only step of substrate-level phosphorylation in the TCA. The beta subunit provides nucleotide specificity of the enzyme and binds the substrate succinate, while the binding sites for coenzyme A and phosphate are found in the alpha subunit. This Rhizobium meliloti (strain 1021) (Ensifer meliloti) protein is Succinate--CoA ligase [ADP-forming] subunit beta.